The chain runs to 628 residues: Kinesin-like protein subito (628 aa).

The disordered stretch occupies residues 28–68; that stretch reads RFRPRPNKKMRLFDNIQESEEESFSEYSDTESEYKYQSSEA. Residues 44–58 are compositionally biased toward acidic residues; that stretch reads QESEEESFSEYSDTE. One can recognise a Kinesin motor domain in the interval 87–479; the sequence is GPQVFLRLRP…LNFASIAKNI (393 aa). Position 169–176 (169–176) interacts with ATP; sequence GTSGSGKT. A coiled-coil region spans residues 509–612; that stretch reads DYTKELEDEN…KNPASDTDIS (104 aa). A disordered region spans residues 596 to 628; it reads KDEIEELKNPASDTDISDDPNESKSPIEILDDD. A Phosphoserine modification is found at serine 607. Threonine 609 carries the phosphothreonine modification. Serine 612 carries the phosphoserine modification.

The protein belongs to the TRAFAC class myosin-kinesin ATPase superfamily. Kinesin family.

It is found in the cytoplasm. The protein localises to the cytoskeleton. Required during female meiosis for bipolar spindle formation in the absence of the centrosomes and chromosome homolog segregation. Also has roles in male meiosis and mitotic divisions of the early embryo. In Drosophila melanogaster (Fruit fly), this protein is Kinesin-like protein subito (sub).